A 144-amino-acid polypeptide reads, in one-letter code: Universal stress protein F (144 aa).

The protein belongs to the universal stress protein A family. Homodimer.

The polypeptide is Universal stress protein F (uspF) (Escherichia coli (strain K12)).